Reading from the N-terminus, the 21-residue chain is Putative pancreatic polypeptide 2 (21 aa).

It belongs to the NPY family.

This Homo sapiens (Human) protein is Putative pancreatic polypeptide 2 (PPY2P).